A 130-amino-acid polypeptide reads, in one-letter code: Small ribosomal subunit protein uS9 (130 aa).

It belongs to the universal ribosomal protein uS9 family.

The protein is Small ribosomal subunit protein uS9 of Geotalea daltonii (strain DSM 22248 / JCM 15807 / FRC-32) (Geobacter daltonii).